A 206-amino-acid polypeptide reads, in one-letter code: Large ribosomal subunit protein uL4 (206 aa).

The tract at residues 63–93 (MYKQKGTGRARHHSARAPQFRGGGKAHGPVV) is disordered. The segment covering 64-77 (YKQKGTGRARHHSA) has biased composition (basic residues).

The protein belongs to the universal ribosomal protein uL4 family. Part of the 50S ribosomal subunit.

In terms of biological role, one of the primary rRNA binding proteins, this protein initially binds near the 5'-end of the 23S rRNA. It is important during the early stages of 50S assembly. It makes multiple contacts with different domains of the 23S rRNA in the assembled 50S subunit and ribosome. Forms part of the polypeptide exit tunnel. In Sinorhizobium fredii (strain NBRC 101917 / NGR234), this protein is Large ribosomal subunit protein uL4.